We begin with the raw amino-acid sequence, 342 residues long: Protein BASIC PENTACYSTEINE6 (342 aa).

A coiled-coil region spans residues 41–67 (AIQERNLAISEKKAAVAERDMAFLQRD). Positions 41 to 76 (AIQERNLAISEKKAAVAERDMAFLQRDTAIAERNNA) are alanine-zipper. Residues 143-199 (REMEPNDGLPTSPPAGSTLESAKPKRGKRVNPKATTQTAANKRGPKNQRKVKKESED) are disordered. The interval 164–195 (AKPKRGKRVNPKATTQTAANKRGPKNQRKVKK) is required for nucleus and nucleolus localization. Residues 185-194 (RGPKNQRKVK) are compositionally biased toward basic residues. The short motif at 192–195 (KVKK) is the Nuclear localization signal element.

It belongs to the BBR/BPC family. In terms of assembly, homodimer. Heterodimer with BPC4. Expressed in seedlings, leaves and pistils. Detected in the base of flowers and tips of carpels, in sepal vasculature, in young rosette, in the lateral and tip of primary roots, and in ovule at the exception of the outer integument.

Its subcellular location is the nucleus. It is found in the nucleolus. Transcriptional regulator that specifically binds to GA-rich elements (GAGA-repeats) present in regulatory sequences of genes involved in developmental processes. The polypeptide is Protein BASIC PENTACYSTEINE6 (BPC6) (Arabidopsis thaliana (Mouse-ear cress)).